Consider the following 365-residue polypeptide: U-box domain-containing protein 56 (365 aa).

Residues 176-281 (YEEQRRRLEI…ELLRALEKGE (106 aa)) adopt a coiled-coil conformation. One can recognise a U-box domain in the interval 293-365 (EPPQCFICPI…AIKDWLQQHP (73 aa)).

It catalyses the reaction S-ubiquitinyl-[E2 ubiquitin-conjugating enzyme]-L-cysteine + [acceptor protein]-L-lysine = [E2 ubiquitin-conjugating enzyme]-L-cysteine + N(6)-ubiquitinyl-[acceptor protein]-L-lysine.. Its pathway is protein modification; protein ubiquitination. Functions as an E3 ubiquitin ligase. In Arabidopsis thaliana (Mouse-ear cress), this protein is U-box domain-containing protein 56 (PUB56).